Here is a 218-residue protein sequence, read N- to C-terminus: NAD(P)H-quinone oxidoreductase subunit I (218 aa).

2 consecutive 4Fe-4S ferredoxin-type domains span residues 55–84 (GRIH…VDWV) and 95–124 (RNYS…MTEE). Positions 64, 67, 70, 74, 104, 107, 110, and 114 each coordinate [4Fe-4S] cluster. Residues 179-218 (LRAGKLPSQIIKELQADKSEEEGKNNSSDMVPNKLNSTNK) form a disordered region. Basic and acidic residues predominate over residues 192 to 202 (LQADKSEEEGK). The span at 203-218 (NNSSDMVPNKLNSTNK) shows a compositional bias: polar residues.

Belongs to the complex I 23 kDa subunit family. As to quaternary structure, NDH-1 is composed of at least 11 different subunits. It depends on [4Fe-4S] cluster as a cofactor.

The protein resides in the cellular thylakoid membrane. The catalysed reaction is a plastoquinone + NADH + (n+1) H(+)(in) = a plastoquinol + NAD(+) + n H(+)(out). It catalyses the reaction a plastoquinone + NADPH + (n+1) H(+)(in) = a plastoquinol + NADP(+) + n H(+)(out). Functionally, NDH-1 shuttles electrons from an unknown electron donor, via FMN and iron-sulfur (Fe-S) centers, to quinones in the respiratory and/or the photosynthetic chain. The immediate electron acceptor for the enzyme in this species is believed to be plastoquinone. Couples the redox reaction to proton translocation, and thus conserves the redox energy in a proton gradient. The polypeptide is NAD(P)H-quinone oxidoreductase subunit I (Prochlorococcus marinus (strain NATL2A)).